Here is a 705-residue protein sequence, read N- to C-terminus: Prolyl endopeptidase (705 aa).

The first 20 residues, 1–20, serve as a signal peptide directing secretion; it reads MKYKKLSVAVAAFAFAAVSA. Catalysis depends on charge relay system residues Ser556 and His675.

Belongs to the peptidase S9A family. Monomer.

It localises to the periplasm. The enzyme catalyses Hydrolysis of Pro-|-Xaa &gt;&gt; Ala-|-Xaa in oligopeptides.. Its function is as follows. Cleaves peptide bonds on the C-terminal side of prolyl residues within peptides that are up to approximately 30 amino acids long. Has an absolute requirement for an X-Pro bond in the trans configuration immediately preceding the Pro-Y scissible bond. The polypeptide is Prolyl endopeptidase (Elizabethkingia miricola (Chryseobacterium miricola)).